Here is a 541-residue protein sequence, read N- to C-terminus: Glucose-6-phosphate isomerase (541 aa).

The Proton donor role is filled by Glu-346. Residues His-377 and Lys-506 contribute to the active site.

Belongs to the GPI family.

It localises to the cytoplasm. The enzyme catalyses alpha-D-glucose 6-phosphate = beta-D-fructose 6-phosphate. It participates in carbohydrate biosynthesis; gluconeogenesis. It functions in the pathway carbohydrate degradation; glycolysis; D-glyceraldehyde 3-phosphate and glycerone phosphate from D-glucose: step 2/4. Functionally, catalyzes the reversible isomerization of glucose-6-phosphate to fructose-6-phosphate. The protein is Glucose-6-phosphate isomerase of Sinorhizobium medicae (strain WSM419) (Ensifer medicae).